The following is a 316-amino-acid chain: Ribosomal protein L11 methyltransferase (316 aa).

The S-adenosyl-L-methionine site is built by threonine 160, glycine 181, aspartate 203, and asparagine 246.

The protein belongs to the methyltransferase superfamily. PrmA family.

It localises to the cytoplasm. It catalyses the reaction L-lysyl-[protein] + 3 S-adenosyl-L-methionine = N(6),N(6),N(6)-trimethyl-L-lysyl-[protein] + 3 S-adenosyl-L-homocysteine + 3 H(+). Its function is as follows. Methylates ribosomal protein L11. The chain is Ribosomal protein L11 methyltransferase from Heliobacterium modesticaldum (strain ATCC 51547 / Ice1).